The following is a 64-amino-acid chain: Large ribosomal subunit protein bL35 (64 aa).

Residues 17–41 (TGSGKVKRERMNGSHNLEHKNRKRT) form a disordered region. Residues 25–35 (ERMNGSHNLEH) are compositionally biased toward basic and acidic residues.

The protein belongs to the bacterial ribosomal protein bL35 family.

The sequence is that of Large ribosomal subunit protein bL35 from Chlorobaculum parvum (strain DSM 263 / NCIMB 8327) (Chlorobium vibrioforme subsp. thiosulfatophilum).